The following is a 459-amino-acid chain: ATP synthase subunit beta 1 (459 aa).

An ATP-binding site is contributed by 148–155 (GGAGVGKT).

The protein belongs to the ATPase alpha/beta chains family. In terms of assembly, F-type ATPases have 2 components, CF(1) - the catalytic core - and CF(0) - the membrane proton channel. CF(1) has five subunits: alpha(3), beta(3), gamma(1), delta(1), epsilon(1). CF(0) has three main subunits: a(1), b(2) and c(9-12). The alpha and beta chains form an alternating ring which encloses part of the gamma chain. CF(1) is attached to CF(0) by a central stalk formed by the gamma and epsilon chains, while a peripheral stalk is formed by the delta and b chains.

It localises to the cell inner membrane. The enzyme catalyses ATP + H2O + 4 H(+)(in) = ADP + phosphate + 5 H(+)(out). Functionally, produces ATP from ADP in the presence of a proton gradient across the membrane. The catalytic sites are hosted primarily by the beta subunits. The polypeptide is ATP synthase subunit beta 1 (Nitrosospira multiformis (strain ATCC 25196 / NCIMB 11849 / C 71)).